Reading from the N-terminus, the 358-residue chain is C-X-C chemokine receptor type 2 (358 aa).

Topologically, residues 1-46 are extracellular; the sequence is MQEFTWENYSYEDFFGDFSNYSYSTDLPPTLLDSAPCRSESLETNS. N-linked (GlcNAc...) asparagine glycosylation is found at N8 and N20. The chain crosses the membrane as a helical span at residues 47-73; it reads YVVLITYILVFLLSLLGNSLVMLVILY. The Cytoplasmic segment spans residues 74-82; the sequence is SRSTCSVTD. Residues 83 to 103 traverse the membrane as a helical segment; that stretch reads VYLLNLAIADLLFATTLPIWA. At 104–118 the chain is on the extracellular side; it reads ASKVHGWTFGTPLCK. A disulfide bridge links C117 with C194. A helical membrane pass occupies residues 119-140; it reads VVSLVKEVNFYSGILLLACISV. Residues 141 to 161 lie on the Cytoplasmic side of the membrane; that stretch reads DRYLAIVHATRTMIQKRHLVK. A helical transmembrane segment spans residues 162-181; the sequence is FICLSMWGVSLILSLPILLF. Topologically, residues 182–206 are extracellular; sequence RNAIFPPNSSPVCYEDMGNSTAKWR. The helical transmembrane segment at 207–229 threads the bilayer; that stretch reads MVLRILPQTFGFILPLLVMLFCY. At 230–249 the chain is on the cytoplasmic side; the sequence is VFTLRTLFQAHMGQKHRAMR. A helical transmembrane segment spans residues 250 to 271; the sequence is VIFAVVLIFLLCWLPYNLVLLT. At 272-292 the chain is on the extracellular side; the sequence is DTLMRTHVIQETCERRNDIDR. The chain crosses the membrane as a helical span at residues 293–313; the sequence is ALDATEILGFLHSCLNPIIYA. The Cytoplasmic portion of the chain corresponds to 314–358; it reads FIGQKFRYGLLKILAAHGLISKEFLAKESRPSFVASSSGNTSTTL.

It belongs to the G-protein coupled receptor 1 family. In terms of assembly, interacts with IL8. Interacts with GNAI2. Post-translationally, phosphorylated upon ligand binding; which is required for desensitization. Expressed preferentially in neutrophils.

Its subcellular location is the cell membrane. In terms of biological role, receptor for interleukin-8 which is a powerful neutrophil chemotactic factor. Binding of IL-8 to the receptor causes activation of neutrophils. This response is mediated via a G-protein that activates a phosphatidylinositol-calcium second messenger system. Binds to IL-8 with high affinity. Also binds with high affinity to CXCL3, GRO/MGSA and NAP-2. In Oryctolagus cuniculus (Rabbit), this protein is C-X-C chemokine receptor type 2 (CXCR2).